We begin with the raw amino-acid sequence, 398 residues long: Probable L-tyrosine/L-aspartate decarboxylase (398 aa).

An N6-(pyridoxal phosphate)lysine modification is found at K242.

Belongs to the group II decarboxylase family. MfnA subfamily. Pyridoxal 5'-phosphate serves as cofactor.

It carries out the reaction L-tyrosine + H(+) = tyramine + CO2. The enzyme catalyses L-aspartate + H(+) = beta-alanine + CO2. The protein operates within cofactor biosynthesis; methanofuran biosynthesis. It functions in the pathway cofactor biosynthesis; coenzyme A biosynthesis. In terms of biological role, catalyzes the decarboxylation of L-tyrosine to produce tyramine for methanofuran biosynthesis. Can also catalyze the decarboxylation of L-aspartate to produce beta-alanine for coenzyme A (CoA) biosynthesis. This chain is Probable L-tyrosine/L-aspartate decarboxylase, found in Methanosarcina mazei (strain ATCC BAA-159 / DSM 3647 / Goe1 / Go1 / JCM 11833 / OCM 88) (Methanosarcina frisia).